The primary structure comprises 187 residues: UPF0200 protein APE_1753.1 (187 aa).

13-20 is an ATP binding site; sequence GLPGSGKS.

This sequence belongs to the UPF0200 family.

In Aeropyrum pernix (strain ATCC 700893 / DSM 11879 / JCM 9820 / NBRC 100138 / K1), this protein is UPF0200 protein APE_1753.1.